The chain runs to 256 residues: 5-oxoprolinase subunit A 3 (256 aa).

This sequence belongs to the LamB/PxpA family. In terms of assembly, forms a complex composed of PxpA, PxpB and PxpC.

It catalyses the reaction 5-oxo-L-proline + ATP + 2 H2O = L-glutamate + ADP + phosphate + H(+). In terms of biological role, catalyzes the cleavage of 5-oxoproline to form L-glutamate coupled to the hydrolysis of ATP to ADP and inorganic phosphate. This is 5-oxoprolinase subunit A 3 from Pseudomonas syringae pv. tomato (strain ATCC BAA-871 / DC3000).